Consider the following 327-residue polypeptide: Gamma-resorcylate decarboxylase (327 aa).

Glu-8 and His-10 together coordinate Zn(2+). 3 residues coordinate 2,6-dihydroxybenzoate: Phe-23, His-164, and Asp-287. His-164 and Asp-287 together coordinate Zn(2+). Asp-287 is an active-site residue.

Belongs to the metallo-dependent hydrolases superfamily. ACMSD family. In terms of assembly, homotetramer. Dimer of dimers. Zn(2+) is required as a cofactor.

It carries out the reaction 2,6-dihydroxybenzoate + H(+) = resorcinol + CO2. The catalysed reaction is 2,3-dihydroxybenzoate + H(+) = catechol + CO2. The protein operates within aromatic compound metabolism. Its activity is regulated as follows. Inhibited by CuCl(2), monoiodoacetate and diethylpyrocarbonate. Inhibited by 2,3-dihydroxybenzaldehyde, which is an analog of the substrate 2,3-dihydroxybenzoate. Its function is as follows. Involved in the gamma-resorcylate (2,6-dihydroxybenzoate) catabolism. Catalyzes the reversible decarboxylation of gamma-resorcylate to resorcinol. The reaction is reversible, but equilibrium greatly favors the decarboxylation reaction. Also catalyzes the decarboxylation of 2,3-dihydroxybenzoate to catechol, but does not act on 2,4-dihydroxybenzoate, 2,5-dihydroxybenzoate, 3,4-dihydroxybenzoate, 3,5-dihydroxybenzoate, 2-hydroxybenzoate, or 3-hydroxybenzoate. Only resorcinol is carboxylated by the reverse reaction. This Rhizobium sp. (strain MTP-10005) protein is Gamma-resorcylate decarboxylase.